The following is a 406-amino-acid chain: Tryptophan synthase beta chain (406 aa).

An N6-(pyridoxal phosphate)lysine modification is found at K99.

This sequence belongs to the TrpB family. In terms of assembly, tetramer of two alpha and two beta chains. It depends on pyridoxal 5'-phosphate as a cofactor.

It carries out the reaction (1S,2R)-1-C-(indol-3-yl)glycerol 3-phosphate + L-serine = D-glyceraldehyde 3-phosphate + L-tryptophan + H2O. Its pathway is amino-acid biosynthesis; L-tryptophan biosynthesis; L-tryptophan from chorismate: step 5/5. The beta subunit is responsible for the synthesis of L-tryptophan from indole and L-serine. This Rhizobium etli (strain CIAT 652) protein is Tryptophan synthase beta chain.